Consider the following 235-residue polypeptide: Ribonuclease 3 (235 aa).

The RNase III domain maps to 6 to 131 (IDQLKKLTGH…LIAVIYLDGG (126 aa)). Residue glutamate 44 coordinates Mg(2+). Aspartate 48 is a catalytic residue. Positions 117 and 120 each coordinate Mg(2+). Glutamate 120 is an active-site residue. In terms of domain architecture, DRBM spans 156-225 (DAKTELQEWA…AEKILRREGM (70 aa)).

Belongs to the ribonuclease III family. In terms of assembly, homodimer. Requires Mg(2+) as cofactor.

Its subcellular location is the cytoplasm. It catalyses the reaction Endonucleolytic cleavage to 5'-phosphomonoester.. Digests double-stranded RNA. Involved in the processing of primary rRNA transcript to yield the immediate precursors to the large and small rRNAs (23S and 16S). Processes some mRNAs, and tRNAs when they are encoded in the rRNA operon. Processes pre-crRNA and tracrRNA of type II CRISPR loci if present in the organism. This is Ribonuclease 3 from Bartonella bacilliformis (strain ATCC 35685 / KC583 / Herrer 020/F12,63).